Consider the following 289-residue polypeptide: Serine/threonine-protein phosphatase PGAM5, mitochondrial (289 aa).

The Mitochondrial matrix portion of the chain corresponds to 1-6 (MAFRQA). Residues 7–29 (LQLAACGLAGGSAAVLFSAVAVG) traverse the membrane as a helical segment. The Mitochondrial intermembrane segment spans residues 30-289 (KPRAGGDAEP…FMPPDKITRS (260 aa)). The disordered stretch occupies residues 32–59 (RAGGDAEPRPAEPPAWAGGARPGPGVWD). Residues 45-56 (PAWAGGARPGPG) are compositionally biased toward low complexity. The tract at residues 77–82 (NVESGE) is interaction with KEAP1. S80 and S87 each carry phosphoserine. Residues K116, K144, and K191 each carry the N6-acetyllysine modification.

It belongs to the phosphoglycerate mutase family. BPG-dependent PGAM subfamily. Dimer. Forms a ternary complex with NFE2L2 and KEAP1. Interacts with BCL2L1 and MAP3K5. Upon TNF-induced necrosis, forms in complex with RIPK1, RIPK3 and MLKL; the formation of this complex leads to PGAM5 phosphorylation. Isoform 2, but not isoform 1, interacts with DNM1L; this interaction leads to DNM1L dephosphorylation and activation and eventually to mitochondria fragmentation. Both isoform 1 and isoform 2 are phosphorylated by the RIPK1/RIPK3 complex under necrotic conditions. This phosphorylation increases PGAM5 phosphatase activity. Post-translationally, proteolytically cleaved by PARL in response to loss of mitochondrial membrane potential.

The protein resides in the mitochondrion outer membrane. Its subcellular location is the mitochondrion inner membrane. It catalyses the reaction O-phospho-L-seryl-[protein] + H2O = L-seryl-[protein] + phosphate. It carries out the reaction O-phospho-L-threonyl-[protein] + H2O = L-threonyl-[protein] + phosphate. Mitochondrial serine/threonine phosphatase that dephosphorylates various substrates and thus plays a role in different biological processes including cellular senescence or mitophagy. Modulates cellular senescence by regulating mitochondrial dynamics. Mechanistically, participates in mitochondrial fission through dephosphorylating DNM1L/DRP1. Additionally, dephosphorylates MFN2 in a stress-sensitive manner and consequently protects it from ubiquitination and degradation to promote mitochondrial network formation. Regulates mitophagy independent of PARKIN by interacting with and dephosphorylating FUNDC1, which interacts with LC3. Regulates anti-oxidative response by forming a tertiary complex with KEAP1 and NRF2. Regulates necroptosis by acting as a RIPK3 target and recruiting the RIPK1-RIPK3-MLKL necrosis 'attack' complex to mitochondria. This chain is Serine/threonine-protein phosphatase PGAM5, mitochondrial (PGAM5), found in Homo sapiens (Human).